A 535-amino-acid polypeptide reads, in one-letter code: Alpha-1,3-mannosyl-glycoprotein 4-beta-N-acetylglucosaminyltransferase A (535 aa).

The Cytoplasmic portion of the chain corresponds to 1–6 (MRLRNG). The helical; Signal-anchor for type II membrane protein transmembrane segment at 7-27 (TVATALVFVTSFLTLSWYTTW) threads the bilayer. Residues 28–63 (QNGKEKLIAYQREFLALKERLRVAEHRISQRSSELN) are a coiled coil. Residues 28-535 (QNGKEKLIAY…NEIHIKKVTS (508 aa)) lie on the Lumenal side of the membrane. N-linked (GlcNAc...) asparagine glycans are attached at residues Asn-77 and Asn-458. Ser-474 is subject to Phosphoserine.

This sequence belongs to the glycosyltransferase 54 family. The cofactor is a divalent metal cation. Post-translationally, N-glycosylated.

Its subcellular location is the golgi apparatus membrane. It localises to the secreted. The enzyme catalyses N(4)-{beta-D-GlcNAc-(1-&gt;2)-alpha-D-Man-(1-&gt;3)-[beta-D-GlcNAc-(1-&gt;2)-alpha-D-Man-(1-&gt;6)]-beta-D-Man-(1-&gt;4)-beta-D-GlcNAc-(1-&gt;4)-beta-D-GlcNAc}-L-asparaginyl-[protein] + UDP-N-acetyl-alpha-D-glucosamine = N(4)-{beta-D-GlcNAc-(1-&gt;2)-[beta-D-GlcNAc-(1-&gt;4)]-alpha-D-Man-(1-&gt;3)-[beta-D-GlcNAc-(1-&gt;2)-alpha-D-Man-(1-&gt;6)]-beta-D-Man-(1-&gt;4)-beta-D-GlcNAc-(1-&gt;4)-beta-D-GlcNAc}-L-asparaginyl-[protein] + UDP + H(+). The catalysed reaction is an N(4)-{beta-D-GlcNAc-(1-&gt;2)-alpha-D-Man-(1-&gt;3)-[alpha-D-Man-(1-&gt;6)]-beta-D-Man-(1-&gt;4)-beta-D-GlcNAc-(1-&gt;4)-beta-D-GlcNAc}-L-asparaginyl-[protein] + UDP-N-acetyl-alpha-D-glucosamine = an N(4)-{beta-D-GlcNAc-(1-&gt;2)-[beta-D-GlcNAc-(1-&gt;4)]-alpha-D-Man-(1-&gt;3)-[alpha-D-Man-(1-&gt;6)]-beta-D-Man-(1-&gt;4)-beta-D-GlcNAc-(1-&gt;4)-beta-D-GlcNAc}-L-asparaginyl-[protein] + UDP + H(+). It carries out the reaction an N(4)-{beta-D-GlcNAc-(1-&gt;2)-alpha-D-Man-(1-&gt;3)-[beta-D-GlcNAc-(1-&gt;2)-[beta-D-GlcNAc-(1-&gt;6)]-alpha-D-Man-(1-&gt;6)]-beta-D-Man-(1-&gt;4)-beta-D-GlcNAc-(1-&gt;4)-beta-D-GlcNAc}-L-asparaginyl-[protein] + UDP-N-acetyl-alpha-D-glucosamine = an N(4)-{beta-D-GlcNAc-(1-&gt;2)-[beta-D-GlcNAc-(1-&gt;4)]-alpha-D-Man-(1-&gt;3)-[beta-D-GlcNAc-(1-&gt;2)-[beta-D-GlcNAc-(1-&gt;6)]-alpha-D-Man-(1-&gt;6)]-beta-D-Man-(1-&gt;4)-beta-D-GlcNAc-(1-&gt;4)-beta-D-GlcNAc}-L-asparaginyl-[protein] + UDP + H(+). It catalyses the reaction an N(4)-{beta-D-GlcNAc-(1-&gt;2)-alpha-D-Man-(1-&gt;3)-[beta-D-GlcNAc-(1-&gt;2)-alpha-D-Man-(1-&gt;6)]-beta-D-Man-(1-&gt;4)-beta-D-GlcNAc-(1-&gt;4)-[alpha-L-Fuc-(1-&gt;6)]-beta-D-GlcNAc}-L-asparaginyl-[protein] + UDP-N-acetyl-alpha-D-glucosamine = N(4)-{beta-D-GlcNAc-(1-&gt;2)-[beta-D-GlcNAc-(1-&gt;4)]-alpha-D-Man-(1-&gt;3)-[beta-D-GlcNAc-(1-&gt;2)-alpha-D-Man-(1-&gt;6)]-beta-D-Man-(1-&gt;4)-beta-D-GlcNAc-(1-&gt;4)-[alpha-L-Fuc-(1-&gt;6)]-beta-D-GlcNAc}-asparaginyl-[protein] + UDP + H(+). The enzyme catalyses an N(4)-{beta-D-GlcNAc-(1-&gt;2)-alpha-D-Man-(1-&gt;3)-[beta-D-Gal-(1-&gt;4)-beta-D-GlcNAc-(1-&gt;2)-alpha-D-Man-(1-&gt;6)]-beta-D-Man-(1-&gt;4)-beta-D-GlcNAc-(1-&gt;4)-beta-D-GlcNAc}-L-asparaginyl-[protein] + UDP-N-acetyl-alpha-D-glucosamine = an N(4)-{beta-D-GlcNAc-(1-&gt;2)-[beta-D-GlcNAc-(1-&gt;4)]-alpha-D-Man-(1-&gt;3)-[beta-D-Gal-(1-&gt;4)-beta-D-GlcNAc-(1-&gt;2)-alpha-D-Man-(1-&gt;6)]-beta-D-Man-(1-&gt;4)-beta-D-GlcNAc-(1-&gt;4)-beta-D-GlcNAc}-L-asparaginyl-[protein] + UDP + H(+). The catalysed reaction is N(4)-{beta-D-GlcNAc-(1-&gt;2)-alpha-D-Man-(1-&gt;3)-[alpha-D-Man-(1-&gt;3)-{alpha-D-Man-(1-&gt;6)}-alpha-D-Man-(1-&gt;6)]-beta-D-Man-(1-&gt;4)-beta-D-GlcNAc-(1-&gt;4)-beta-D-GlcNAc}-asparaginyl-[protein] + UDP-N-acetyl-alpha-D-glucosamine = N(4)-{beta-D-GlcNAc-(1-&gt;2)-[beta-D-GlcNAc-(1-&gt;4)]-alpha-D-Man-(1-&gt;3)-[alpha-D-Man-(1-&gt;3)-{alpha-D-Man-(1-&gt;6)}-alpha-D-Man-(1-&gt;6)]-beta-D-Man-(1-&gt;4)-beta-D-GlcNAc-(1-&gt;4)-beta-D-GlcNAc}-asparaginyl-[protein] + UDP + H(+). It carries out the reaction N(4)-{beta-D-GlcNAc-(1-&gt;2)-alpha-D-Man-(1-&gt;3)-beta-D-Man-(1-&gt;4)-beta-D-GlcNAc-(1-&gt;4)-beta-D-GlcNAc}-asparaginyl-[protein] + UDP-N-acetyl-alpha-D-glucosamine = N(4)-{beta-D-GlcNAc-(1-&gt;2)-[beta-D-GlcNAc-(1-&gt;4)]-alpha-D-Man-(1-&gt;3)-beta-D-Man-(1-&gt;4)-beta-D-GlcNAc-(1-&gt;4)-beta-D-GlcNAc}-asparaginyl-[protein] + UDP + H(+). It functions in the pathway protein modification; protein glycosylation. Inhibited by UDP. Its function is as follows. Glycosyltransferase that catalyze the transfer of GlcNAc from UDP-GlcNAc to the GlcNAcbeta1-2Manalpha1-3 arm of the core structure of N-linked glycans through a beta1-4 linkage and participates in the production of tri- and tetra-antennary N-linked sugar chains. Involved in glucose transport by mediating SLC2A2/GLUT2 glycosylation, thereby controlling cell-surface expression of SLC2A2 in pancreatic beta cells. The polypeptide is Alpha-1,3-mannosyl-glycoprotein 4-beta-N-acetylglucosaminyltransferase A (Mus musculus (Mouse)).